The chain runs to 332 residues: Formamidase (332 aa).

Residues 14 to 259 (FLTALIQYPV…WEIVTAEVYP (246 aa)) form the CN hydrolase domain. Residue Glu60 is the Proton acceptor of the active site. Lys132 functions as the Proton donor in the catalytic mechanism. Cys165 serves as the catalytic Nucleophile.

Belongs to the carbon-nitrogen hydrolase superfamily. Aliphatic amidase family.

It catalyses the reaction formamide + H2O = formate + NH4(+). In terms of biological role, is an aliphatic amidase with a restricted substrate specificity, as it only hydrolyzes formamide. In Bacillus cereus (strain G9842), this protein is Formamidase.